The chain runs to 570 residues: MPARISRATYAQMFGPTVGDKVRLADTDLIIEVERDLTTYGEEVKFGGGKVIRDGMGQSQLSRAEGAMDTVITNALILDHSGIYKADIGLLDGRIALIGKAGNPDTQPGISIIIGPGTEIIAGEGKIVTAGGIDTHVHFISPQQVDEALNAGITCMVGGGTGPAHGTLATTCTPGPWHIARLIQSFDGLPMNIGVFGKGNASLPGALEEMVRAGACGLKLHEDWGCTPAAIDNCLSVADHFDVQVAIHTDTLNEGGFVEDTLNAFKGRTIHSFHTEGAGGGHAPDIIRVCQYPNVLPASTNPTRPYTVNTIAEHLDMLMVCHHLSPAIPEDIAFAESRIRKETIAAEDILHDMGAFSIISSDSQAMGRVGEMIIRCWQTADKMKKQRGSLPDDRPGNDNYRARRYIAKYTINPAIAHGMAHEIGSVEVGKRADLVLWNSAFFGVKPDMVLLGGWIATAPMGDANGSIPTPQPMHTRPMFGSFGKALTNTSITFVSQAAMDEGLREKIGVDKQLVAVVNTRGGIGKHSMILNNAMPQMEVDPETYEVRADGELLTCEPVDVVPMAQRYFLF.

Residues 131–570 (GGIDTHVHFI…VPMAQRYFLF (440 aa)) enclose the Urease domain. Ni(2+) is bound by residues histidine 136, histidine 138, and lysine 219. Lysine 219 bears the N6-carboxylysine mark. Residue histidine 221 participates in substrate binding. Positions 248 and 274 each coordinate Ni(2+). Histidine 322 (proton donor) is an active-site residue. Aspartate 362 lines the Ni(2+) pocket.

This sequence belongs to the metallo-dependent hydrolases superfamily. Urease alpha subunit family. As to quaternary structure, heterotrimer of UreA (gamma), UreB (beta) and UreC (alpha) subunits. Three heterotrimers associate to form the active enzyme. Ni cation serves as cofactor. In terms of processing, carboxylation allows a single lysine to coordinate two nickel ions.

It is found in the cytoplasm. The enzyme catalyses urea + 2 H2O + H(+) = hydrogencarbonate + 2 NH4(+). It functions in the pathway nitrogen metabolism; urea degradation; CO(2) and NH(3) from urea (urease route): step 1/1. In Brucella melitensis biotype 1 (strain ATCC 23456 / CCUG 17765 / NCTC 10094 / 16M), this protein is Urease subunit alpha 1.